Consider the following 96-residue polypeptide: MKPYRLSRRAKADLDDIWTYSEQRWGVEQAADYARELQATIEMIAEHPGMGQPDENLRAGYRRCASGSHVVFYRVGVRVEIIRVLHQSMNARAHLG.

The protein belongs to the RelE toxin family. As to quaternary structure, forms a ParD1(2)-ParE1(2) heterotetramer.

In terms of biological role, toxic component of a type II toxin-antitoxin (TA) system. Its toxic effect is neutralized by coexpression with cognate antitoxin ParD1 but no other ParD or RelB antitoxin. Low levels of wild-type toxin in the absence of antitoxin decreases the rate of cell growth, and results in death or loss of colony formation abilities and greatly elongated cells. Low levels of a mutant missing the last 4 residues leads to loss of cell division while cell elongation continues. The sequence is that of Toxin ParE1 (parE1) from Caulobacter vibrioides (strain ATCC 19089 / CIP 103742 / CB 15) (Caulobacter crescentus).